Consider the following 1074-residue polypeptide: Chitin synthase 2 (1074 aa).

Disordered stretches follow at residues 1–32 (MSHY…AHSG), 56–179 (QAAP…PSQH), and 209–255 (RSDS…PYNN). Positions 19 to 29 (DQQQPYYTDQA) are enriched in polar residues. Low complexity predominate over residues 68 to 80 (RIRSNSSGSRSVS). Residues asparagine 72 and asparagine 97 are each glycosylated (N-linked (GlcNAc...) asparagine). The span at 85 to 119 (AYTNQGIPPVPSNLSAARQRSDPSQALPPSSSSYA) shows a compositional bias: polar residues. A compositionally biased stretch (low complexity) spans 129 to 143 (SSHRNAPNAPNSNHP). An N-linked (GlcNAc...) asparagine glycan is attached at asparagine 149. Asparagine 289 carries an N-linked (GlcNAc...) asparagine glycan. The next 8 helical transmembrane spans lie at 608 to 628 (VFGF…KALL), 742 to 762 (LVLL…FYFL), 779 to 799 (GAAI…VVLV), 817 to 837 (IIIF…TIYL), 867 to 887 (IVIS…LHLE), 891 to 911 (MLTS…ILSM), 1001 to 1021 (LVLI…STWW), and 1048 to 1068 (IFWS…TFLL).

Belongs to the chitin synthase family. Class II subfamily.

It is found in the cell membrane. It localises to the cytoplasmic vesicle membrane. It carries out the reaction [(1-&gt;4)-N-acetyl-beta-D-glucosaminyl](n) + UDP-N-acetyl-alpha-D-glucosamine = [(1-&gt;4)-N-acetyl-beta-D-glucosaminyl](n+1) + UDP + H(+). Its function is as follows. Polymerizes chitin, a structural polymer of the cell wall and septum, by transferring the sugar moiety of UDP-GlcNAc to the non-reducing end of the growing chitin polymer. This Mycosarcoma maydis (Corn smut fungus) protein is Chitin synthase 2 (CHS2).